We begin with the raw amino-acid sequence, 93 residues long: Small ribosomal subunit protein uS19 (93 aa).

Belongs to the universal ribosomal protein uS19 family.

Functionally, protein S19 forms a complex with S13 that binds strongly to the 16S ribosomal RNA. The polypeptide is Small ribosomal subunit protein uS19 (Mycobacterium tuberculosis (strain ATCC 25177 / H37Ra)).